The sequence spans 369 residues: Phenylalanine--tRNA ligase alpha subunit (369 aa).

E269 serves as a coordination point for Mg(2+).

Belongs to the class-II aminoacyl-tRNA synthetase family. Phe-tRNA synthetase alpha subunit type 1 subfamily. Tetramer of two alpha and two beta subunits. It depends on Mg(2+) as a cofactor.

Its subcellular location is the cytoplasm. The catalysed reaction is tRNA(Phe) + L-phenylalanine + ATP = L-phenylalanyl-tRNA(Phe) + AMP + diphosphate + H(+). This Brucella abortus (strain 2308) protein is Phenylalanine--tRNA ligase alpha subunit.